The primary structure comprises 250 residues: Ubiquinone biosynthesis O-methyltransferase (250 aa).

Residues R41, G72, D93, and M136 each contribute to the S-adenosyl-L-methionine site.

It belongs to the methyltransferase superfamily. UbiG/COQ3 family.

The catalysed reaction is a 3-demethylubiquinol + S-adenosyl-L-methionine = a ubiquinol + S-adenosyl-L-homocysteine + H(+). It catalyses the reaction a 3-(all-trans-polyprenyl)benzene-1,2-diol + S-adenosyl-L-methionine = a 2-methoxy-6-(all-trans-polyprenyl)phenol + S-adenosyl-L-homocysteine + H(+). The protein operates within cofactor biosynthesis; ubiquinone biosynthesis. In terms of biological role, O-methyltransferase that catalyzes the 2 O-methylation steps in the ubiquinone biosynthetic pathway. This chain is Ubiquinone biosynthesis O-methyltransferase, found in Agrobacterium fabrum (strain C58 / ATCC 33970) (Agrobacterium tumefaciens (strain C58)).